Here is a 1228-residue protein sequence, read N- to C-terminus: Clustered mitochondria protein homolog (1228 aa).

Residues 298-557 (PSSLPSNSID…DNNPLDVGFA (260 aa)) form the Clu domain. The TPR 1 repeat unit spans residues 486 to 519 (CYGFDEASNKVIADAEFGSSLDDFAKVFHLKKHE). Positions 671–702 (LGRVIELAEQELEAQRALREAHLQQVEADNKE) form a coiled coil. TPR repeat units lie at residues 982 to 1015 (AESY…YERV) and 1108 to 1141 (AVNE…FSKE).

It belongs to the CLU family. As to quaternary structure, may associate with the eukaryotic translation initiation factor 3 (eIF-3) complex.

Its subcellular location is the cytoplasm. Its function is as follows. mRNA-binding protein involved in proper cytoplasmic distribution of mitochondria. The protein is Clustered mitochondria protein homolog of Eremothecium gossypii (strain ATCC 10895 / CBS 109.51 / FGSC 9923 / NRRL Y-1056) (Yeast).